The sequence spans 831 residues: Thymine dioxygenase JBP1-B (831 aa).

Residues 80 to 282 (VVGGVLLPGA…RLTCVCYYRA (203 aa)) are thymine dioxygenase. Fe cation contacts are provided by His207, Asp209, and His257. Position 273 (Arg273) interacts with 2-oxoglutarate. The DNA-binding JBP1 domain stretch occupies residues 409 to 578 (LGGALKAAEE…IEEARRRGNA (170 aa)).

This sequence belongs to the TET family. JBP1 subfamily. In terms of assembly, monomer. Binds to DNA as a monomer. Requires Fe(2+) as cofactor.

The protein localises to the nucleus. The enzyme catalyses thymine + 2-oxoglutarate + O2 = 5-hydroxymethyluracil + succinate + CO2. In terms of biological role, dioxygenase that catalyzes the first step of DNA base J (beta-d-glucosyl-HOMedU) biosynthesis by converting thymine to 5-hydroxymethyluracil (HOMedU). DNA base J is a hypermodified thymidine residue found in the genome of kinetoplastid parasites, which is localized primarily to repetitive DNA, namely the telomeres, and is implicated in the regulation of antigenic variation. Also specifically binds to base J-containing DNA (J-DNA). Involved in propagation and maintenance of DNA base J synthesis initiated by JBP2 by specifically binding already synthesized DNA base J and propagating J synthesis. Thymine dioxygenase activity and J-DNA-binding are independent functions. The protein is Thymine dioxygenase JBP1-B (JBP1B) of Trypanosoma cruzi (strain CL Brener).